The following is a 323-amino-acid chain: tRNA dimethylallyltransferase (323 aa).

12-19 (GPTAAGKT) contacts ATP. 14–19 (TAAGKT) contacts substrate. Interaction with substrate tRNA stretches follow at residues 37–40 (DSAL) and 161–165 (QRLIR).

The protein belongs to the IPP transferase family. In terms of assembly, monomer. The cofactor is Mg(2+).

The catalysed reaction is adenosine(37) in tRNA + dimethylallyl diphosphate = N(6)-dimethylallyladenosine(37) in tRNA + diphosphate. Functionally, catalyzes the transfer of a dimethylallyl group onto the adenine at position 37 in tRNAs that read codons beginning with uridine, leading to the formation of N6-(dimethylallyl)adenosine (i(6)A). This chain is tRNA dimethylallyltransferase, found in Pseudomonas putida (strain ATCC 47054 / DSM 6125 / CFBP 8728 / NCIMB 11950 / KT2440).